The primary structure comprises 311 residues: CARD domain-containing protein E10 (311 aa).

The CARD domain occupies 21–110 (IWDVERLCLE…EHLVDLLERA (90 aa)). Disordered stretches follow at residues 125–181 (ESGA…GGVY), 203–230 (GAGRGGSLLSGGHGGHPPHGGPGGGGRD), and 243–311 (IPEP…FFCC). Positions 140-152 (EDNSGYTALLPTN) are enriched in polar residues. Residues 252–272 (SGGGGRGGGVRYDAGGDGRLG) show a composition bias toward gly residues.

It localises to the host cell membrane. Functionally, activates host NF-kappa-B and JNK pathways. Induces hyperphosphorylation and redistribution of host bcl-10 from the cytoplasm to the plasma membrane. The inhibitory effect of cellular bcl-10 on NF-kappa-B pathway is then overcome allowing NF-kappa-B activation. This chain is CARD domain-containing protein E10 (E10), found in Equus caballus (Horse).